Reading from the N-terminus, the 176-residue chain is Salivary antigen 1 (176 aa).

Positions 1 to 18 (MNYCFLVFLVYLVFAVNG) are cleaved as a signal peptide.

It localises to the secreted. The chain is Salivary antigen 1 from Ctenocephalides felis (Cat flea).